The following is a 69-amino-acid chain: Disintegrin EC6 subunit beta (69 aa).

In terms of domain architecture, Disintegrin spans 1–65; that stretch reads NSVHPCCDPV…DCPPNPWNGK (65 aa). 4 disulfide bridges follow: Cys-6–Cys-29, Cys-20–Cys-26, Cys-25–Cys-50, and Cys-38–Cys-57. The Cell attachment site signature appears at 42-44; sequence RGD.

Belongs to the venom metalloproteinase (M12B) family. P-II subfamily. P-IIe sub-subfamily. In terms of assembly, heterodimer with subunit alpha; disulfide-linked. As to expression, expressed by the venom gland.

The protein localises to the secreted. Functionally, potently inhibits adhesion of alpha-4/beta-1 (ITGA4/ITGB1) and alpha-9/beta-1 (ITGA9/ITGB1) integrins to VCAM1, and adhesion of alpha-5/beta-1 (ITGA5/ITGB1) integrin to fibronectin. Has a much less effect on alpha-IIb/beta-3 (ITGA2B/ITGB3) integrin. Also potently inhibits neutrophil migration across TNF-alpha-activated human umbilical endothelial cells. This is Disintegrin EC6 subunit beta from Echis carinatus sochureki (Saw-scaled viper).